Consider the following 126-residue polypeptide: Probable cystatin-16 (126 aa).

Positions 1 to 20 (MFLKATLLLGLAVLGMHVWA) are cleaved as a signal peptide. Cys84 and Cys94 are joined by a disulfide. A glycan (N-linked (GlcNAc...) asparagine) is linked at Asn106.

It belongs to the cystatin family.

Its subcellular location is the secreted. In Bos taurus (Bovine), this protein is Probable cystatin-16.